A 227-amino-acid chain; its full sequence is UPF0173 metal-dependent hydrolase YtkL (227 aa).

It belongs to the UPF0173 family.

The sequence is that of UPF0173 metal-dependent hydrolase YtkL (ytkL) from Bacillus subtilis (strain 168).